Here is a 228-residue protein sequence, read N- to C-terminus: L-ribulose-5-phosphate 4-epimerase UlaF (228 aa).

Substrate-binding positions include 26 to 27, 43 to 44, and 72 to 73; these read GN, SG, and SS. Residues Asp-74, His-93, and His-95 each contribute to the Zn(2+) site. Asp-118 functions as the Proton donor/acceptor in the catalytic mechanism. A Zn(2+)-binding site is contributed by His-167. Tyr-225 functions as the Proton donor/acceptor in the catalytic mechanism.

This sequence belongs to the aldolase class II family. AraD/FucA subfamily. It depends on Zn(2+) as a cofactor.

The catalysed reaction is L-ribulose 5-phosphate = D-xylulose 5-phosphate. The protein operates within cofactor degradation; L-ascorbate degradation; D-xylulose 5-phosphate from L-ascorbate: step 4/4. In terms of biological role, catalyzes the isomerization of L-ribulose 5-phosphate to D-xylulose 5-phosphate. Is involved in the anaerobic L-ascorbate utilization. The sequence is that of L-ribulose-5-phosphate 4-epimerase UlaF from Shigella flexneri.